The chain runs to 363 residues: Peptide chain release factor 1 (363 aa).

Gln-237 is modified (N5-methylglutamine). Over residues Glu-284 to Arg-296 the composition is skewed to basic and acidic residues. The tract at residues Glu-284–Ser-306 is disordered.

This sequence belongs to the prokaryotic/mitochondrial release factor family. Post-translationally, methylated by PrmC. Methylation increases the termination efficiency of RF1.

The protein resides in the cytoplasm. Functionally, peptide chain release factor 1 directs the termination of translation in response to the peptide chain termination codons UAG and UAA. This is Peptide chain release factor 1 from Shewanella putrefaciens (strain CN-32 / ATCC BAA-453).